The sequence spans 776 residues: Protein SEY1 (776 aa).

Topologically, residues 1-681 (MADRSAIQLI…KRSIITTRTH (681 aa)) are cytoplasmic. The region spanning 34–263 (GLDYHVISVF…TENYYFKPQY (230 aa)) is the GB1/RHD3-type G domain. GTP is bound at residue 44-51 (GSQSSGKS). The chain crosses the membrane as a helical span at residues 682–702 (IPPWIYVLLAVLGWNEFVAVI). At 703–705 (RNP) the chain is on the lumenal side. A helical transmembrane segment spans residues 706–726 (LFVTLTLILGATFFVIHKFGL). Over 727–776 (WGPVVNVVQSAVGETRTAIKDKLRQFVVEDHEVKESFEMKDFSKNEQKEK) the chain is Cytoplasmic.

The protein belongs to the TRAFAC class dynamin-like GTPase superfamily. GB1/RHD3 GTPase family. RHD3 subfamily. Interacts with RTN1 and YOP1; GTP binding is not required for these interactions.

Its subcellular location is the endoplasmic reticulum membrane. Cooperates with the reticulon proteins RTN1 and RTN2 and the tubule-shaping DP1 family protein YOP1 to generate and maintain the structure of the tubular endoplasmic reticulum network. Has GTPase activity, which is required for its function in ER organization. The polypeptide is Protein SEY1 (Saccharomyces cerevisiae (strain YJM789) (Baker's yeast)).